The following is a 1024-amino-acid chain: Multidrug resistance protein MdtC (1024 aa).

The next 12 membrane-spanning stretches (helical) occupy residues 12 to 32 (VATT…FSLL), 333 to 353 (EVER…FIFL), 360 to 380 (LIPA…MYLC), 387 to 407 (LSLM…IVVL), 435 to 455 (VLSM…MAGL), 469 to 489 (VAIG…CAWL), 528 to 548 (WVMV…ISIP), 853 to 873 (LWLI…LYES), 875 to 895 (VHPL…LLAL), 897 to 917 (LFDA…IGIV), 953 to 973 (PIIM…LSSG), and 984 to 1004 (ITIV…TPVI).

It belongs to the resistance-nodulation-cell division (RND) (TC 2.A.6) family. MdtC subfamily. In terms of assembly, part of a tripartite efflux system composed of MdtA, MdtB and MdtC. MdtC forms a heteromultimer with MdtB.

The protein resides in the cell inner membrane. The chain is Multidrug resistance protein MdtC from Yersinia pestis bv. Antiqua (strain Antiqua).